The primary structure comprises 582 residues: Type I secretion system ATP-binding protein PrsD (582 aa).

3 consecutive transmembrane segments (helical) span residues 22–42 (FIGVGVASALVNLLYLTGSFF), 59–79 (LIALSLLALLLYAFQGAFELI), and 148–168 (IAICFLFHPVIGLIAIIGGLI). The ABC transmembrane type-1 domain occupies 22–301 (FIGVGVASAL…AIGNWRGLVA (280 aa)). The ABC transporter domain maps to 332 to 568 (LTVEGLASGP…VLRPQQVERQ (237 aa)). 366 to 373 (GPSASGKS) lines the ATP pocket.

This sequence belongs to the ABC transporter superfamily. As to quaternary structure, part of a type I secretion system composed of PrsD and PrsE.

The protein localises to the cell inner membrane. Functionally, mediates secretion of glycanase ExsH. The sequence is that of Type I secretion system ATP-binding protein PrsD (prsD) from Rhizobium meliloti (strain 1021) (Ensifer meliloti).